A 319-amino-acid chain; its full sequence is Lipoyl synthase (319 aa).

Residues 1 to 29 (MVVVVDTVSDKPIRPRHPEKAARPDALSP) are disordered. Residues 8 to 29 (VSDKPIRPRHPEKAARPDALSP) show a composition bias toward basic and acidic residues. [4Fe-4S] cluster-binding residues include cysteine 61, cysteine 66, cysteine 72, cysteine 87, cysteine 91, cysteine 94, and serine 300. A Radical SAM core domain is found at 73–289 (WDRKHATFMI…ESLAYAKGFL (217 aa)).

This sequence belongs to the radical SAM superfamily. Lipoyl synthase family. It depends on [4Fe-4S] cluster as a cofactor.

The protein localises to the cytoplasm. It carries out the reaction [[Fe-S] cluster scaffold protein carrying a second [4Fe-4S](2+) cluster] + N(6)-octanoyl-L-lysyl-[protein] + 2 oxidized [2Fe-2S]-[ferredoxin] + 2 S-adenosyl-L-methionine + 4 H(+) = [[Fe-S] cluster scaffold protein] + N(6)-[(R)-dihydrolipoyl]-L-lysyl-[protein] + 4 Fe(3+) + 2 hydrogen sulfide + 2 5'-deoxyadenosine + 2 L-methionine + 2 reduced [2Fe-2S]-[ferredoxin]. The protein operates within protein modification; protein lipoylation via endogenous pathway; protein N(6)-(lipoyl)lysine from octanoyl-[acyl-carrier-protein]: step 2/2. Functionally, catalyzes the radical-mediated insertion of two sulfur atoms into the C-6 and C-8 positions of the octanoyl moiety bound to the lipoyl domains of lipoate-dependent enzymes, thereby converting the octanoylated domains into lipoylated derivatives. The polypeptide is Lipoyl synthase (Rhodopseudomonas palustris (strain BisA53)).